Consider the following 145-residue polypeptide: AP-2 complex subunit sigma (145 aa).

The protein belongs to the adaptor complexes small subunit family. As to quaternary structure, adaptor protein complex 2 (AP-2) is a heterotetramer composed of two large adaptins (alpha-type subunit apl3 and beta-type subunit apl1), a medium chain (mu-type subunit apm4) and a small adaptin (sigma-type subunit aps2).

The protein localises to the cell membrane. The protein resides in the membrane. Its subcellular location is the coated pit. Functionally, component of the adaptor complexes which link clathrin to receptors in coated vesicles. Clathrin-associated protein complexes are believed to interact with the cytoplasmic tails of membrane proteins, leading to their selection and concentration. The polypeptide is AP-2 complex subunit sigma (aps2) (Aspergillus fumigatus (strain ATCC MYA-4609 / CBS 101355 / FGSC A1100 / Af293) (Neosartorya fumigata)).